Consider the following 404-residue polypeptide: Cysteine desulfurase IscS (404 aa).

Pyridoxal 5'-phosphate-binding positions include 75-76 (AT), asparagine 155, glutamine 183, and 203-205 (SAH). Position 206 is an N6-(pyridoxal phosphate)lysine (lysine 206). Position 243 (threonine 243) interacts with pyridoxal 5'-phosphate. Catalysis depends on cysteine 328, which acts as the Cysteine persulfide intermediate. Residue cysteine 328 coordinates [2Fe-2S] cluster.

It belongs to the class-V pyridoxal-phosphate-dependent aminotransferase family. NifS/IscS subfamily. As to quaternary structure, homodimer. Forms a heterotetramer with IscU, interacts with other sulfur acceptors. Pyridoxal 5'-phosphate serves as cofactor.

Its subcellular location is the cytoplasm. It carries out the reaction (sulfur carrier)-H + L-cysteine = (sulfur carrier)-SH + L-alanine. It functions in the pathway cofactor biosynthesis; iron-sulfur cluster biosynthesis. Its function is as follows. Master enzyme that delivers sulfur to a number of partners involved in Fe-S cluster assembly, tRNA modification or cofactor biosynthesis. Catalyzes the removal of elemental sulfur atoms from cysteine to produce alanine. Functions as a sulfur delivery protein for Fe-S cluster synthesis onto IscU, an Fe-S scaffold assembly protein, as well as other S acceptor proteins. The chain is Cysteine desulfurase IscS from Pseudomonas fluorescens (strain ATCC BAA-477 / NRRL B-23932 / Pf-5).